The chain runs to 454 residues: tRNA modification GTPase MnmE (454 aa).

(6S)-5-formyl-5,6,7,8-tetrahydrofolate contacts are provided by Arg-23, Glu-80, and Lys-120. Residues 216–377 (GMKVVIAGRP…LRDHLKQSMG (162 aa)) enclose the TrmE-type G domain. K(+) is bound at residue Asn-226. GTP contacts are provided by residues 226-231 (NAGKSS), 245-251 (TDIAGTT), 270-273 (DTAG), 335-338 (NKAD), and 358-360 (SAR). Ser-230 is a Mg(2+) binding site. 3 residues coordinate K(+): Thr-245, Ile-247, and Thr-250. Thr-251 provides a ligand contact to Mg(2+). (6S)-5-formyl-5,6,7,8-tetrahydrofolate is bound at residue Lys-454.

It belongs to the TRAFAC class TrmE-Era-EngA-EngB-Septin-like GTPase superfamily. TrmE GTPase family. In terms of assembly, homodimer. Heterotetramer of two MnmE and two MnmG subunits. Requires K(+) as cofactor.

Its subcellular location is the cytoplasm. Its function is as follows. Exhibits a very high intrinsic GTPase hydrolysis rate. Involved in the addition of a carboxymethylaminomethyl (cmnm) group at the wobble position (U34) of certain tRNAs, forming tRNA-cmnm(5)s(2)U34. This is tRNA modification GTPase MnmE from Yersinia pseudotuberculosis serotype IB (strain PB1/+).